Reading from the N-terminus, the 147-residue chain is Transcriptional regulator MraZ (147 aa).

2 consecutive SpoVT-AbrB domains span residues 5–47 (QQLR…SEKE) and 76–123 (TFEI…SKSK).

Belongs to the MraZ family. Forms oligomers.

The protein localises to the cytoplasm. Its subcellular location is the nucleoid. The chain is Transcriptional regulator MraZ from Mycoplasmopsis synoviae (strain 53) (Mycoplasma synoviae).